Consider the following 441-residue polypeptide: Transcription factor bHLH90 (441 aa).

Residues 260–309 (NFKSKNLHSERKRRERINQAMYGLRAVVPKITKLNKIGIFSDAVDYINEL) enclose the bHLH domain.

Homodimer. In terms of tissue distribution, expressed constitutively in roots, leaves, stems, and flowers.

The protein localises to the nucleus. This chain is Transcription factor bHLH90 (BHLH90), found in Arabidopsis thaliana (Mouse-ear cress).